The sequence spans 3078 residues: MENQNIKYGDNDVAIIGIGLRLPNSINKPLELWEGLLAGFDGIVETTNRWSDSFSAMDEISSKYAGLIDLDEWMSFDPLFFGIIPTEVPSIDPQQRLLLKCTWEAFEDANIDPFKLRGTNTSVYVGASSLDYASINVDFDETPMNIFNSNMSGISNRISYCYDFRGTSLTIDTACSSSLNAVHLGYKSIINGESDYSIVGGCNFIMSPHTSRSFESINVTSKTGKSKAFDQDANGFVRSEGVVSIILKKMSKAIQDGDQIYSVIKGTNSNVDGNLNKGNFFAPSKQSQANNIKSAMESCNKETTNSTPIALNDIDFFELHGTSTQIGDPIECEGVSSVFKESREKPLLIGSIKANIGHLEPASGVASLAKVALMFKHRQFVKNINFDKPNPNIKFDEWKIKVCTENTPFPNNKKVSIAINSFGITGSNACLILTEYIKPKTTTTTTANNNGNQKYLIPISANSKSSLESYKEKLINSSKEFSETINFKDFVKYQLDSKTLKLTQRSVIIASNWEEAGSTQSIVTTNTNRSGNIIKDANKNPQLVFVFSGQGPQWSKMFTQLYDQEPIFKQKTDQIDSLLSKHYGYSILNKLNSIKDDDTVTINEPILAQPSVFMIQMALIELYKHWGILASISIGHSLGEVSSAVCSGMIDLETGCFIIYHRSRLQQQTVGSGRMLVASLNEQQFNQEFQQKYPSIEISCFNSPFSIVLAGKESELQEISNILKEKETFSIFLSTQSSFHSSSQEPIKDELLKQLKDIKSTKSNIPNFSTVTSNLFNDNDDDEVVQQPDEASSHNSTTTLFDSNYVYENVRKPVQFEKAIKNVFNYIEKKGLGSSVIFLEISASPVLGNYIREMIPQDSNYFFIEDQTISVLSSLNKKNKDQVLEIQTSISQLYCKGYNVNFNCSNQTKSLDFKNTGYKQLSDVLFKYSWDDESYWSVSPLISNYIKNGPATNHLGYRNERQPYQSFTSSIDIKKEPFEFLKGHSSRNRVIYPGCGYIDSILKAFPDQDLTIQSMEYKSAILLSSSMKTYLSTNIIPSGKNEYRVSFHYKDKKTNKWILSCSGRLSTTKHNDEVVKKVDIEKLKSKCNFVTIQKKELYETIKYKAQLTLEGKFQSIEEVSYGHNCCLSKVPLTTLSSYDNESFLNLCVIDAAFQPLGAVKENQEPMVFASIENLKFFSKNIPKSAEDREKYKFVYTYTQVKEKKCGSYFVSILTMLQDGTILFFSPLVVYTQLTPYKNQYIIESPNDNLYKICYQSKDSTLPHPLLLKDKFDQPRFETTDKQSQVIKKALSNCLFAIFKRNNNLFTKVEVKSQSIDYLIEKYCLIIDNDDDNDGIDDNSILVNGGVASIDDMVLASTTGKETTIVNNGKRSLAKLIFQILKSNVDLIDWNNIATYTKNISKQQLNIIQAIGNLIVTPLSVTNQVTESDLISKTQLDIINNRMKIKQYELISNTIATDLIKPIINNSILFRILEINSGFGYLSEMIINKINQLLIEFESSYEIEIEFTFTLNGTNQDDNKEISNSIKEKLTNLLISKSSISIIFKELNLNESFLEQKFNPSYYDLIVLTNLSTITNLNESIEFINSILYPNGHLIIIDTKNQSNFQDYEIFEQFLIFDNFGGGIVDDNIDWVKIFQDNNINRVVATPNIKPHVIQVQKSKLYEKVMGTLDDITGPYDQIIIIGYQLQGTDEDNFQSPIMDINKQGTDIYRIKTIEEFEKHCSTIPPTDKSILFFISAMNNLSLENYKQVNFDYIKINQYLLANKLGSLFILATKSALKESTNALAASLIGSFRYFSEFSNILNLYSFDFGEDVYTLSKEISLKWLNMAIDLLDPNKHIQREYIFRNGNETWFERIGKIKRVKSKYQSKSYLDDKEDSLVARLDQNLEYQLEAKQSNLKENEIEVQVVATGINFKDSLIFRNLVPPVLANHEGDFSKPEFGFECSGIVSRIGSKVKKFKVGDSVLGISWKSTSSHAINYQDAFVLKPDNISFVEAASIPIVYCTSFYSLFYSGNLSIKNNESVLIHQASGGIGLACLNILKSCGFKSKLYVTVGSKEKEDYLRETYGDFITGIYSSRNTDFLENIKTDLSNKNDNNNNNNNNNNDNKESNIKELLDNDDDEILPFIHKKGVDLIINTLPFEFLDTNFLLLGQGGRIVDLSVTHLNNNDTTDFSKFKWFIGYSTVEIFYNGFEKSKHILQLITDMIKNKELPLIPIKEYPINQIKDAIDFIGQRKHIGKIVINHKLGLRDGCSNLVQDTIKSLQNHLKDNYLVASPDFKFMGDSLGKTILLTGQTGLSLSIAQACLLNNYQDLEGIIVISKSPIKHELQYLISLAKYLSRKTRVHFKQADCSKFDEMRKVISEIYEKDDPKLSPVESIFHNAFVPVMSEPQDIDMKHIDDAYDAKTTGAMNLYMLMSMYDWKLKNFFFSSSITSVSGSSRQAGYCGANLVLESMAKVIQSQGIRCSTICWGIIGDTGYVSRNESVAKFLNGLGNAPMPLNMVLGSLDLLLQQPTLSTDTTIIASFDFNNLPKLSRDGSNNISYKFDYFTNPIQSNQNNCSSDDLSIREQILAKFSEFLSVDDQSKINLDIKLLDYGADSMVIVELKNYLDKTYTPNILSIQQLQNITINQLIQSVTDAMNKLNGNENKSIKKSNKLVQQKQIDWVKEIKLDSSIKPTDEMIKLFKQLQQQASTTTSNTVFLTGSSGFIGIYILFYLIKSVNCKIVYCLIRRKTIEEATTFLIEFLKVHQLYNQLTTDEINKIKPVLGDYTLDSFGLSVDQYTNISNNVDLIINSAASVNYQMGYEDSKVESVEGVLQCLRFSCHNKLKKLFQVSTLGIYSDDKRDNLDDYTFAQIDPKIIQSKNSIINGYLQGKIVSEYHIKEAANRGIPCCIIRLPFIGPNPNTGVGRDLDLFQTLFQSCYAMSTYPKQESGLQFYATPVTWAAQNLSFISLNPKCWSTSSNHPSSISENLTCYSLFGESICFNVLLTELATQLKWKPTSSGEFLKKLRSFPNEPSCKKLHIVLKNTKNLLLNVYIPGNYKLNPTLKQLLQSNNTYEGWKITPEMILTHLSFIFKKKLNK.

The Ketosynthase family 3 (KS3) domain occupies 10–435; it reads DNDVAIIGIG…GSNACLILTE (426 aa). Catalysis depends on for beta-ketoacyl synthase activity residues C175, H320, and H358. The acyl/malonyl transferase stretch occupies residues 627–660; that stretch reads GILASISIGHSLGEVSSAVCSGMIDLETGCFIIY. The active-site For acyl/malonyl transferase activity is S637. The tract at residues 952-1072 is N-terminal hotdog fold; the sequence is TNHLGYRNER…GRLSTTKHND (121 aa). In terms of domain architecture, PKS/mFAS DH spans 952–1239; the sequence is TNHLGYRNER…YTQLTPYKNQ (288 aa). The active-site Proton acceptor; for dehydratase activity is H984. The interval 1088–1239 is C-terminal hotdog fold; it reads NFVTIQKKEL…YTQLTPYKNQ (152 aa). D1150 serves as the catalytic Proton donor; for dehydratase activity. Positions 2080–2119 form a coiled coil; sequence LENIKTDLSNKNDNNNNNNNNNNDNKESNIKELLDNDDDE. The segment at 2087–2108 is disordered; sequence LSNKNDNNNNNNNNNNDNKESN. The span at 2090–2102 shows a compositional bias: low complexity; the sequence is KNDNNNNNNNNNN. One can recognise a Carrier domain in the interval 2558–2636; the sequence is SDDLSIREQI…QLIQSVTDAM (79 aa). S2596 carries the post-translational modification O-(pantetheine 4'-phosphoryl)serine. The helical transmembrane segment at 2694–2714 threads the bilayer; the sequence is NTVFLTGSSGFIGIYILFYLI.

Requires pantetheine 4'-phosphate as cofactor.

Its subcellular location is the membrane. Probable polyketide synthase. The polypeptide is Probable polyketide synthase 44 (pks44) (Dictyostelium discoideum (Social amoeba)).